We begin with the raw amino-acid sequence, 82 residues long: UPF0235 protein Pden_2174 (82 aa).

It belongs to the UPF0235 family.

The sequence is that of UPF0235 protein Pden_2174 from Paracoccus denitrificans (strain Pd 1222).